The sequence spans 83 residues: Cytochrome c-554(548) (83 aa).

Heme c is bound by residues C14, C17, H18, and M63.

As to quaternary structure, homodimer. Binds 1 heme c group covalently per subunit.

The protein is Cytochrome c-554(548) of Halomonas halodenitrificans (strain ATCC 12084 / NCIMB 8669) (Paracoccus halodenitrificans).